The primary structure comprises 242 residues: Uridylate kinase (242 aa).

16 to 19 (KVSG) serves as a coordination point for ATP. Gly-58 provides a ligand contact to UMP. The ATP site is built by Gly-59 and Arg-63. UMP is bound by residues Asp-78 and 139 to 146 (TGNPFCTT). Residues Thr-166, Gln-167, Tyr-172, and Asp-175 each coordinate ATP.

Belongs to the UMP kinase family. Homohexamer.

The protein localises to the cytoplasm. It catalyses the reaction UMP + ATP = UDP + ADP. It participates in pyrimidine metabolism; CTP biosynthesis via de novo pathway; UDP from UMP (UMPK route): step 1/1. With respect to regulation, inhibited by UTP. In terms of biological role, catalyzes the reversible phosphorylation of UMP to UDP. This Rickettsia conorii (strain ATCC VR-613 / Malish 7) protein is Uridylate kinase.